Here is a 355-residue protein sequence, read N- to C-terminus: tRNA (guanine-N(1)-)-methyltransferase (355 aa).

Residues Gly109 and 129–134 (IGDYVL) each bind S-adenosyl-L-methionine.

Belongs to the RNA methyltransferase TrmD family. In terms of assembly, homodimer.

It localises to the cytoplasm. The catalysed reaction is guanosine(37) in tRNA + S-adenosyl-L-methionine = N(1)-methylguanosine(37) in tRNA + S-adenosyl-L-homocysteine + H(+). Specifically methylates guanosine-37 in various tRNAs. In Chlamydia abortus (strain DSM 27085 / S26/3) (Chlamydophila abortus), this protein is tRNA (guanine-N(1)-)-methyltransferase.